We begin with the raw amino-acid sequence, 383 residues long: Putative transcription factor 282R (383 aa).

Belongs to the IIV-6 282R family.

Its function is as follows. Transcription activation. This Acheta domesticus (House cricket) protein is Putative transcription factor 282R.